A 451-amino-acid polypeptide reads, in one-letter code: Jacalin-related lectin 35 (451 aa).

Ala2 is modified (N-acetylalanine). Jacalin-type lectin domains follow at residues 2–143 (AKKL…YIIP), 156–297 (LTKL…YIIP), and 306–448 (SNTI…NVAP).

Belongs to the jacalin lectin family. As to quaternary structure, component of the PYK10 complex, at least composed of PYK10/BGLU23, BGLU21, BGLU22, JAL22, JAL23, PBP1/JAL30, PBP2/JAL31, JAL32, JAL33, JAL34, JAL35, GLL22 and GLL23.

The polypeptide is Jacalin-related lectin 35 (JAL35) (Arabidopsis thaliana (Mouse-ear cress)).